The sequence spans 492 residues: 2,3-bisphosphoglycerate-independent phosphoglycerate mutase (492 aa).

Residues aspartate 11 and serine 61 each coordinate Mn(2+). The Phosphoserine intermediate role is filled by serine 61. Substrate is bound by residues histidine 118, 147-148 (RD), arginine 178, arginine 184, 248-251 (RNDR), and lysine 320. Mn(2+) contacts are provided by aspartate 386, histidine 390, aspartate 427, histidine 428, and histidine 445.

The protein belongs to the BPG-independent phosphoglycerate mutase family. Monomer. The cofactor is Mn(2+).

It carries out the reaction (2R)-2-phosphoglycerate = (2R)-3-phosphoglycerate. Its pathway is carbohydrate degradation; glycolysis; pyruvate from D-glyceraldehyde 3-phosphate: step 3/5. Its function is as follows. Catalyzes the interconversion of 2-phosphoglycerate and 3-phosphoglycerate. In Campylobacter jejuni subsp. jejuni serotype O:23/36 (strain 81-176), this protein is 2,3-bisphosphoglycerate-independent phosphoglycerate mutase.